We begin with the raw amino-acid sequence, 118 residues long: Thioredoxin AMT13 (118 aa).

The Thioredoxin domain occupies 1 to 110; it reads MSDNKAIQTL…LEDAIRANLG (110 aa). Cysteine 36 and cysteine 39 are joined by a disulfide.

This sequence belongs to the thioredoxin family.

Its pathway is mycotoxin biosynthesis. Its function is as follows. Thioredoxin; part of the gene clusters that mediate the biosynthesis of AM-toxins, host-selective toxins (HSTs) causing Alternaria blotch on apple, a worldwide distributed disease. AM-toxins are cyclic depsipeptides containing the 3 residues 2-hydroxy-isovaleric acid (2-HIV), dehydroalanine, L-alanine which are common for all 3 AM-toxins I to III. The fourth precursor is L-alpha-amino-methoxyphenyl-valeric acid (L-Amv) for AM-toxin I, L-alpha-amino-phenyl-valeric acid (L-Apv) for AM-toxin II, and L-alpha-amino-hydroxyphenyl-valeric acid (L-Ahv) for AM-toxin III. AM-toxins have two target sites for affecting susceptible apple cells; they cause invagination of the plasma membrane and electrolyte loss and chloroplast disorganization. The non-ribosomal peptide synthetase AMT1 contains 4 catalytic modules and is responsible for activation of each residue in AM-toxin. The aldo-keto reductase AMT2 catalyzes the conversion of 2-keto-isovaleric acid (2-KIV) to 2-hydroxy-isovaleric acid (2-HIV), one of the precursor residues incorporated by AMT1 during AM-toxin biosynthesis, by reduction of its ketone to an alcohol. The cytochrome P450 monooxygenase AMT3 and the thioesterase AMT4 are also important for AM-toxin production, but their exact function within the AM-toxin biosynthesis are not known yet. Up to 21 proteins (including AMT1 to AMT4) are predicted to be involved in AM-toxin biosynthesis since their expression ishighly up-regulated in AM-toxin-producing cultures. The chain is Thioredoxin AMT13 from Alternaria alternata (Alternaria rot fungus).